We begin with the raw amino-acid sequence, 112 residues long: Peptidyl-tRNA hydrolase (112 aa).

Belongs to the PTH2 family.

The protein localises to the cytoplasm. The enzyme catalyses an N-acyl-L-alpha-aminoacyl-tRNA + H2O = an N-acyl-L-amino acid + a tRNA + H(+). In terms of biological role, the natural substrate for this enzyme may be peptidyl-tRNAs which drop off the ribosome during protein synthesis. This is Peptidyl-tRNA hydrolase from Haloquadratum walsbyi (strain DSM 16790 / HBSQ001).